A 129-amino-acid chain; its full sequence is Lysozyme C (129 aa).

In terms of domain architecture, C-type lysozyme spans 1 to 129 (KVYGRCELAA…VHAWIRGCRL (129 aa)). 4 disulfides stabilise this stretch: Cys6-Cys127, Cys30-Cys115, Cys64-Cys80, and Cys76-Cys94. Catalysis depends on residues Glu35 and Asp52.

This sequence belongs to the glycosyl hydrolase 22 family. In terms of assembly, monomer.

The protein resides in the secreted. It carries out the reaction Hydrolysis of (1-&gt;4)-beta-linkages between N-acetylmuramic acid and N-acetyl-D-glucosamine residues in a peptidoglycan and between N-acetyl-D-glucosamine residues in chitodextrins.. Its function is as follows. Lysozymes have primarily a bacteriolytic function; those in tissues and body fluids are associated with the monocyte-macrophage system and enhance the activity of immunoagents. The chain is Lysozyme C (LYZ) from Pavo cristatus (Indian peafowl).